A 448-amino-acid chain; its full sequence is MFSKIKKINFFKKTFSFLIAVVMMLFTVLGTNTYKAEAATTSFGGQLKVVGSQLCDSNGKPIQLKGMSSHGLQWYVNFVNYDSMKFLRDKWGVNVIRAAMYTNEGGYISNPSSQKEKIKKIVQDAIDLNMYVIIDWHILSDNNPNTYKEQAKSFFQEMAEEYGKYSNVIYEICNEPNGGTNWANDIKPYANYIIPAIRAIDPNNIIIVGTSTWSQDVDIAADNPLRYSNIMYTCHFYAGTHTQSLRDKINYAMSKGIAIFVTEWGTSDASGNGGPYLDESQKWVDFMASKNISWTNWALCDKSEASAALKSGSSTTGGWTDSDLTTSGLFVKKSIGGSNTTSQTSAPTFSLQSGTYDSAQTVTLTSSDNDSVIHYTTDGTTPTSSSPVYTSPITISKTTTVKAFTTKTGMTDSNITSAVYTISNTDPVKQVSAPTFSYNQEHTIQLKL.

Residues 1–34 (MFSKIKKINFFKKTFSFLIAVVMMLFTVLGTNTY) form the signal peptide. Substrate contacts are provided by residues His70, 74–75 (WY), Tyr101, and His137. Residue Glu175 is the Proton donor of the active site. Tyr237 provides a ligand contact to substrate. Glu263 (nucleophile) is an active-site residue. Substrate is bound by residues 269-270 (AS), Trp297, and 302-304 (KSE).

It belongs to the glycosyl hydrolase 5 (cellulase A) family.

It carries out the reaction Endohydrolysis of (1-&gt;4)-beta-D-glucosidic linkages in cellulose, lichenin and cereal beta-D-glucans.. The sequence is that of Endoglucanase (eglA) from Clostridium saccharobutylicum.